A 521-amino-acid polypeptide reads, in one-letter code: Forkhead box protein N4 (521 aa).

The fork-head DNA-binding region spans 197–293; that stretch reads KPIYSYSCLI…EEMHKWKRKD (97 aa). The tract at residues 371 to 406 is disordered; that stretch reads PQAHLAPDSPAPAQTPPLHALPSLSPGPLPQPAMGR.

Mainly expressed in proliferator progenitor cells in brain and retina rather than differentiated cells. In contrast, is expressed only in postmitotic epithelial cells rather than in proliferative progenitors in the proximal airway.

The protein resides in the nucleus. Its function is as follows. Transcription factor essential for neural and some non-neural tissues development, such as retina and lung respectively. Binds to an 11-bp consensus sequence containing the invariant tetranucleotide 5'-ACGC-3'. During development of the central nervous system, is required to specify the amacrine and horizontal cell fates from multipotent retinal progenitors while suppressing the alternative photoreceptor cell fates through activating DLL4-NOTCH signaling. Also acts synergistically with ASCL1/MASH1 to activate DLL4-NOTCH signaling and drive commitment of p2 progenitors to the V2b interneuron fates during spinal cord neurogenesis. In development of non-neural tissues, plays an essential role in the specification of the atrioventricular canal and is indirectly required for patterning the distal airway during lung development. This Mus musculus (Mouse) protein is Forkhead box protein N4 (Foxn4).